A 213-amino-acid polypeptide reads, in one-letter code: Ras-related protein Rab-25 (213 aa).

GTP-binding residues include S21, G24, K25, T26, N27, S38, H39, T43, and T44. T26 is a Mg(2+) binding site. Short sequence motifs (switch) lie at residues N35–F49 and D67–G84. Mg(2+) contacts are provided by T44 and D67. G70, N125, K126, D128, A156, and L157 together coordinate GTP. S-geranylgeranyl cysteine attachment occurs at residues C209 and C210. C210 carries the cysteine methyl ester modification. Positions I211–L213 are cleaved as a propeptide — removed in mature form.

It belongs to the small GTPase superfamily. Rab family. As to quaternary structure, interacts (GTP-bound form) with RAB11FIP1, RAB11FIP2, RAB11FIP3 and RAB11FIP4. Interacts (via the hypervariable C-terminal region) with ITGB1 (via the cytoplasmic region); the interaction is GTP-dependent. Interacts with ITGAV. Associates with the integrin alpha-V/beta-1 heterodimer. Interacts with VPS33B. Mg(2+) serves as cofactor. In terms of tissue distribution, expression is restricted to epithelial cells. Expressed in ovarian epithelium (NOE) and breast tissue. Expressed in ovarian cancer; expression is increased relative to NOE cells. Expression in ovarian cancer is stage dependent, with stage III and stage IV showing higher levels than early stage cancers. Expressed in breast cancer; expression is increased relative to normal breast tissue.

The protein localises to the cell membrane. The protein resides in the cytoplasmic vesicle. It localises to the cell projection. Its subcellular location is the pseudopodium membrane. It catalyses the reaction GTP + H2O = GDP + phosphate + H(+). Its activity is regulated as follows. Regulated by guanine nucleotide exchange factors (GEFs) which promote the exchange of bound GDP for free GTP. Regulated by GTPase activating proteins (GAPs) which increase the GTP hydrolysis activity. Inhibited by GDP dissociation inhibitors (GDIs) which prevent Rab-GDP dissociation. The small GTPases Rab are key regulators of intracellular membrane trafficking, from the formation of transport vesicles to their fusion with membranes. Rabs cycle between an inactive GDP-bound form and an active GTP-bound form that is able to recruit to membranes different set of downstream effectors directly responsible for vesicle formation, movement, tethering and fusion. RAB25 regulates epithelial cell differentiation, proliferation and survival, thereby playing key roles in tumorigenesis. Promotes invasive migration of cells in which it functions to localize and maintain integrin alpha-V/beta-1 at the tips of extending pseudopodia. Involved in the regulation of epithelial morphogenesis through the control of CLDN4 expression and localization at tight junctions. May selectively regulate the apical recycling pathway. Together with MYO5B regulates transcytosis. In Homo sapiens (Human), this protein is Ras-related protein Rab-25.